Reading from the N-terminus, the 156-residue chain is 6,7-dimethyl-8-ribityllumazine synthase (156 aa).

5-amino-6-(D-ribitylamino)uracil contacts are provided by residues Phe-25, 59-61 (AWE), and 83-85 (AVI). A (2S)-2-hydroxy-3-oxobutyl phosphate-binding site is contributed by 88–89 (ST). His-91 (proton donor) is an active-site residue. Asn-116 provides a ligand contact to 5-amino-6-(D-ribitylamino)uracil. Arg-130 serves as a coordination point for (2S)-2-hydroxy-3-oxobutyl phosphate.

The protein belongs to the DMRL synthase family. As to quaternary structure, forms an icosahedral capsid composed of 60 subunits, arranged as a dodecamer of pentamers.

The catalysed reaction is (2S)-2-hydroxy-3-oxobutyl phosphate + 5-amino-6-(D-ribitylamino)uracil = 6,7-dimethyl-8-(1-D-ribityl)lumazine + phosphate + 2 H2O + H(+). Its pathway is cofactor biosynthesis; riboflavin biosynthesis; riboflavin from 2-hydroxy-3-oxobutyl phosphate and 5-amino-6-(D-ribitylamino)uracil: step 1/2. Catalyzes the formation of 6,7-dimethyl-8-ribityllumazine by condensation of 5-amino-6-(D-ribitylamino)uracil with 3,4-dihydroxy-2-butanone 4-phosphate. This is the penultimate step in the biosynthesis of riboflavin. This chain is 6,7-dimethyl-8-ribityllumazine synthase, found in Acinetobacter baylyi (strain ATCC 33305 / BD413 / ADP1).